The primary structure comprises 383 residues: MLLFRADYNNYAVSELQKLRFDEDEFYKKYDNCVLVQTCNRIEIYFDKNAKIIDINEFAEFEMIKSNNAIKHLLRTASGLNSMIVGEDQIIGQIKNSHRKAKELKKTTKYLDTIFLKAIHTGQKVRNNTKINKGCVSIGSAAVQLAEKTVGLNNKNILVVGAGEIATLVAKALIEKNIRAIVVSNRTYERAELLAKKLNGMAVHFDKLGEAINYNDIIICATGAPHAIIDKDRLKNIKGYKVLIDIANPRDVSDDVMELPNIKLYTIDDLKMVSEENLKKRKDEIPRVEKIIEEELSVLTKQLRKLKFENTIKNYDLYIENLRKREMNKALNMIENGKDPTVVLEKFSKVFANKLISDFVNIVNDDTIGDIERVVNKLNKNKI.

Substrate-binding positions include 38 to 41 (TCNR), S82, 87 to 89 (EDQ), and Q93. Catalysis depends on C39, which acts as the Nucleophile. NADP(+) is bound at residue 161–166 (GAGEIA).

The protein belongs to the glutamyl-tRNA reductase family. In terms of assembly, homodimer.

The enzyme catalyses (S)-4-amino-5-oxopentanoate + tRNA(Glu) + NADP(+) = L-glutamyl-tRNA(Glu) + NADPH + H(+). The protein operates within porphyrin-containing compound metabolism; protoporphyrin-IX biosynthesis; 5-aminolevulinate from L-glutamyl-tRNA(Glu): step 1/2. Catalyzes the NADPH-dependent reduction of glutamyl-tRNA(Glu) to glutamate 1-semialdehyde (GSA). The protein is Glutamyl-tRNA reductase of Methanococcus aeolicus (strain ATCC BAA-1280 / DSM 17508 / OCM 812 / Nankai-3).